Here is an 83-residue protein sequence, read N- to C-terminus: Major outer membrane lipoprotein (83 aa).

Residues 1-19 (MNNVLKFSALALAAVLATG) form the signal peptide. Cys-20 is lipidated: N-palmitoyl cysteine. Cys-20 carries S-diacylglycerol cysteine lipidation.

The protein resides in the cell outer membrane. The polypeptide is Major outer membrane lipoprotein (oprI) (Pseudomonas aeruginosa (strain ATCC 15692 / DSM 22644 / CIP 104116 / JCM 14847 / LMG 12228 / 1C / PRS 101 / PAO1)).